We begin with the raw amino-acid sequence, 363 residues long: Probable matrix metalloproteinase 095L (363 aa).

The signal sequence occupies residues 1–25 (MSVDSFTSRLAVVMTAVVLVWWAQA). A propeptide spans 26–126 (LPVPSPRRGE…PRCGVPDVSK (101 aa)) (activation peptide). Residues 117–124 (PRCGVPDV) carry the Cysteine switch motif. Positions 119 and 275 each coordinate Zn(2+). E276 is a catalytic residue. Zn(2+) contacts are provided by H279 and H285.

It belongs to the peptidase M10A family. Requires Zn(2+) as cofactor.

The protein resides in the secreted. Probable endopeptidase. This Aedes vexans (Inland floodwater mosquito) protein is Probable matrix metalloproteinase 095L.